Here is a 933-residue protein sequence, read N- to C-terminus: Serine/threonine-protein kinase EDR1 (933 aa).

Over residues 1 to 10 the composition is skewed to basic residues; it reads MKHIFKKLHR. Disordered regions lie at residues 1 to 74, 342 to 424, 527 to 550, and 604 to 650; these read MKHI…ADYM, CNSN…TAIG, HRDPRYGNTQSSYATSSSNGAISS, and HGQQ…YRND. Polar residues predominate over residues 37 to 48; that stretch reads NPPQATPSSVTE. Low complexity predominate over residues 53–68; that stretch reads AGATSSMASPAPTAAS. Over residues 342 to 356 the composition is skewed to polar residues; it reads CNSNGNKFPTAQFSN. The span at 367–378 shows a compositional bias: low complexity; that stretch reads SSHSSMANYSSS. Residues 379–389 are compositionally biased toward basic and acidic residues; that stretch reads LDRRTEAERTD. A compositionally biased stretch (low complexity) spans 404–413; it reads SSPSSVTSST. The segment covering 533 to 550 has biased composition (polar residues); that stretch reads GNTQSSYATSSSNGAISS. Basic and acidic residues predominate over residues 607-621; it reads QNDESHIHDHRKYTS. The region spanning 669–925 is the Protein kinase domain; that stretch reads LVIAERIGLG…QLTEVLKPLN (257 aa). ATP is bound by residues 675–683 and Lys-696; that span reads IGLGSYGEV. The active-site Proton acceptor is Asp-792.

The protein belongs to the protein kinase superfamily. TKL Ser/Thr protein kinase family. RAF subfamily. In terms of assembly, interacts with KEG. Binds and recruited by EDR4 at the powdery mildew (e.g. G.cichoracearum) penetration site on the plasma membrane. Post-translationally, autophosphorylated.

Its subcellular location is the cell membrane. The protein resides in the endosome. The protein localises to the nucleus. It is found in the endoplasmic reticulum. It localises to the golgi apparatus. Its subcellular location is the trans-Golgi network. The protein resides in the early endosome. It catalyses the reaction L-seryl-[protein] + ATP = O-phospho-L-seryl-[protein] + ADP + H(+). The enzyme catalyses L-threonyl-[protein] + ATP = O-phospho-L-threonyl-[protein] + ADP + H(+). Functionally, MAPKKK serine/threonine-protein kinase involved in the regulation of a MAP kinase cascade (probably including MPK3 and MPK6) that negatively regulates salicylic acid- (SA-) dependent defense responses, abscisic acid (ABA) signaling, and ethylene-induced senescence. Also modulates stress response (e.g. drought) signaling and cell death, in an ORE9-dependent manner. Functions at a point of cross talk between ethylene, ABA and SA signaling that impinges on senescence and cell death. On the other hand, it confers sensitivity to various pathogens such as the fungus E.cichoracearum, the oomycete H.parasitica and the bacteria P.syringae pv. tomato DC3000. Required for resistance to some hemibiotrophic/necrotrophic fungal pathogens (e.g. C.gloeosporioides, C.higginsianum and A.brassicicola) through the induction of defensin expression, probably by repressing MYC2, an inhibitor of defensin genes (PDFs). Together with KEG, may regulate endocytic trafficking and/or the formation of signaling complexes on trans-Golgi network (TGN)/ early endosome (EE) vesicles during stress responses. The polypeptide is Serine/threonine-protein kinase EDR1 (EDR1) (Arabidopsis thaliana (Mouse-ear cress)).